The primary structure comprises 99 residues: Large ribosomal subunit protein uL23 (99 aa).

It belongs to the universal ribosomal protein uL23 family. Part of the 50S ribosomal subunit. Contacts protein L29, and trigger factor when it is bound to the ribosome.

Its function is as follows. One of the early assembly proteins it binds 23S rRNA. One of the proteins that surrounds the polypeptide exit tunnel on the outside of the ribosome. Forms the main docking site for trigger factor binding to the ribosome. This chain is Large ribosomal subunit protein uL23, found in Shewanella loihica (strain ATCC BAA-1088 / PV-4).